The primary structure comprises 526 residues: Probable 1,4-alpha-glucan branching enzyme MT3115 (526 aa).

The active-site Nucleophile is the Glu-205. Residues Arg-251 and Gly-268 each coordinate substrate. Asp-344 serves as the catalytic Proton donor. Substrate contacts are provided by Trp-396 and Asp-462.

It belongs to the glycosyl hydrolase 57 family.

It catalyses the reaction Transfers a segment of a (1-&gt;4)-alpha-D-glucan chain to a primary hydroxy group in a similar glucan chain.. In terms of biological role, catalyzes the formation of branch points in alpha-glucans by cleavage of an alpha-1,4 glycosidic bond and subsequent transfer of the cleaved-off oligosaccharide to a new alpha-1,6 position. Is probably involved in the biosynthesis of 6-O-methylglucosyl lipopolysaccharides (MGLP). The chain is Probable 1,4-alpha-glucan branching enzyme MT3115 from Mycobacterium tuberculosis (strain CDC 1551 / Oshkosh).